The following is a 477-amino-acid chain: D(1B) dopamine receptor (477 aa).

Residues 1–39 (MLPPGSNGTAYPGQFALYQQLAQGNAVGGSAGAPPLGPS) are Extracellular-facing. Asn7 carries N-linked (GlcNAc...) asparagine glycosylation. A helical transmembrane segment spans residues 40–66 (QVVTACLLTLLIIWTLLGNVLVCAAIV). The Cytoplasmic portion of the chain corresponds to 67 to 77 (RSRHLRANMTN). A helical membrane pass occupies residues 78–104 (VFIVSLAVSDLFVALLVMPWKAVAEVA). Residues 105 to 114 (GYWPFGAFCD) lie on the Extracellular side of the membrane. An intrachain disulfide couples Cys113 to Cys217. A helical transmembrane segment spans residues 115-136 (VWVAFDIMCSTASILNLCVISV). Residues 137 to 158 (DRYWAISRPFRYKRKMTQRMAL) are Cytoplasmic-facing. The helical transmembrane segment at 159–180 (VMVGLAWTLSILISFIPVQLNW) threads the bilayer. At 181 to 223 (HRDQAASWGGLDLPNNLANWTPWEEDFWEPDVNAENCDSSLNR) the chain is on the extracellular side. Residue Asn222 is glycosylated (N-linked (GlcNAc...) asparagine). A helical transmembrane segment spans residues 224 to 246 (TYAISSSLISFYIPVAIMIVTYT). The Cytoplasmic portion of the chain corresponds to 247–296 (RIYRIAQVQIRRISSLERAAEHAQSCRSSAACAPDTSLRASIKKETKVLK). Residues 297–320 (TLSVIMGVFVCCWLPFFILNCMVP) traverse the membrane as a helical segment. The Extracellular segment spans residues 321-340 (FCSGHPEGPPAGFPCVSETT). A helical transmembrane segment spans residues 341–360 (FDVFVWFGWANSSLNPVIYA). The Cytoplasmic portion of the chain corresponds to 361 to 477 (FNADFQKVFA…ITPFTPNGFH (117 aa)). The S-palmitoyl cysteine moiety is linked to residue Cys375.

This sequence belongs to the G-protein coupled receptor 1 family. In terms of tissue distribution, neuron-specific, localized primarily within limbic regions of the brain.

The protein localises to the cell membrane. Dopamine receptor whose activity is mediated by G proteins which activate adenylyl cyclase. This Homo sapiens (Human) protein is D(1B) dopamine receptor (DRD5).